The chain runs to 503 residues: Adenosine deaminase 2-A (503 aa).

Residues 1 to 24 (MHVLFLGDLMWIYLLLLCCASCNG) form the signal peptide. Zn(2+)-binding residues include H105 and H107. Position 108 (D108) interacts with substrate. N-linked (GlcNAc...) asparagine glycosylation is present at N120. C130 and C152 form a disulfide bridge. Residues N167 and N178 are each glycosylated (N-linked (GlcNAc...) asparagine). Substrate-binding positions include 197–204 (WERFEQVF) and H286. N-linked (GlcNAc...) asparagine glycosylation occurs at N290. Residue G319 coordinates substrate. Residue H349 participates in Zn(2+) binding. The active-site Proton donor is E352. Residue N371 is glycosylated (N-linked (GlcNAc...) asparagine). H377 serves as the catalytic Proton acceptor. Zn(2+) is bound at residue D434. A substrate-binding site is contributed by D435.

This sequence belongs to the metallo-dependent hydrolases superfamily. Adenosine and AMP deaminases family. ADGF subfamily. Zn(2+) is required as a cofactor.

The protein resides in the secreted. The catalysed reaction is adenosine + H2O + H(+) = inosine + NH4(+). Its function is as follows. Adenosine deaminase that may contribute to the degradation of extracellular adenosine, a signaling molecule that controls a variety of cellular responses. May play a role in the regulation of cell proliferation. This is Adenosine deaminase 2-A from Danio rerio (Zebrafish).